The chain runs to 363 residues: Fructose-bisphosphate aldolase 1 (363 aa).

Residue Asp-34 participates in dihydroxyacetone phosphate binding. Positions 36 and 39 each coordinate D-glyceraldehyde 3-phosphate. Arg-43 provides a ligand contact to beta-D-fructose 1,6-bisphosphate. Lys-107 serves as a coordination point for D-glyceraldehyde 3-phosphate. Lys-146 contributes to the dihydroxyacetone phosphate binding site. Glu-189 lines the D-glyceraldehyde 3-phosphate pocket. Glu-189 functions as the Proton acceptor in the catalytic mechanism. Dihydroxyacetone phosphate-binding residues include Lys-231, Ser-273, and Gly-274. Lys-231 (schiff-base intermediate with dihydroxyacetone phosphate) is an active-site residue. Beta-D-fructose 1,6-bisphosphate is bound by residues Ser-273–Gly-275 and Ser-301. Dihydroxyacetone phosphate is bound by residues Gly-303 and Arg-304. Residue Arg-304 coordinates beta-D-fructose 1,6-bisphosphate.

The protein belongs to the class I fructose-bisphosphate aldolase family. As to quaternary structure, homotetramer. Component of a complex, at least composed of ald-1, microneme protein MIC2 and ACT1. Interacts with microneme protein MIC2 (via cytoplasmic tail). Interacts with ACT1 (F-actin).

The protein localises to the cytoplasm. It carries out the reaction beta-D-fructose 1,6-bisphosphate = D-glyceraldehyde 3-phosphate + dihydroxyacetone phosphate. The protein operates within carbohydrate degradation; glycolysis; D-glyceraldehyde 3-phosphate and glycerone phosphate from D-glucose: step 4/4. Functionally, plays a key role in glycolysis by catalyzing the cleavage of fructose 1,6-bisphosphate into dihydroxyacetone phosphate and glyceraldehyde 3-phosphate. Forms a bridge between cell surface adhesins and the actin cytoskeleton. Required for parasite invasion of host cells. This Toxoplasma gondii protein is Fructose-bisphosphate aldolase 1.